The primary structure comprises 415 residues: von Willebrand factor A domain-containing protein 1 (415 aa).

Positions 1–18 are cleaved as a signal peptide; sequence MLFWTAFSMALSLRLALA. The VWFA domain maps to 34–209; sequence DLLFLLDSSA…IIARELRGSI (176 aa). Residues Ser74, Ser80, and Ser93 each carry the phosphoserine modification. 2 Fibronectin type-III domains span residues 214 to 305 and 307 to 403; these read QPQQ…LQEE and GPER…TRAP. A glycan (N-linked (GlcNAc...) asparagine) is linked at Asn264. Residues Cys369 and Cys393 are joined by a disulfide bond. The tract at residues 391–415 is disordered; the sequence is KACTASGARTRAPQSMRPEAGPREP.

As to quaternary structure, homodimer or homomultimer; disulfide-linked. Interacts with HSPG2. In terms of processing, N-glycosylated. Expressed at high levels in the chondrocytes. Detected in the vasculature of neural tissues, in basement membrane structures of the peripheral nervous system, in the apical ectodermal ridge of developing limb buds, and in skeletal and cardiac muscle (at protein level).

It localises to the secreted. Its subcellular location is the extracellular space. The protein localises to the extracellular matrix. The protein resides in the basement membrane. Promotes matrix assembly. Involved in the organization of skeletal muscles and in the formation of neuromuscular junctions. This is von Willebrand factor A domain-containing protein 1 (Vwa1) from Mus musculus (Mouse).